We begin with the raw amino-acid sequence, 134 residues long: Small ribosomal subunit protein uS8c (134 aa).

This sequence belongs to the universal ribosomal protein uS8 family. Part of the 30S ribosomal subunit.

Its subcellular location is the plastid. Functionally, one of the primary rRNA binding proteins, it binds directly to 16S rRNA central domain where it helps coordinate assembly of the platform of the 30S subunit. The chain is Small ribosomal subunit protein uS8c (rps8) from Epifagus virginiana (Beechdrops).